A 623-amino-acid polypeptide reads, in one-letter code: Protein EDS1 (623 aa).

Ala-2 carries the post-translational modification N-acetylalanine. Ser-123 functions as the Nucleophile in the catalytic mechanism. Active-site charge relay system residues include Asp-187 and His-317. Residues 358–383 (VQAALEEEKKRVENQKKIIQVIEQER) adopt a coiled-coil conformation.

As to quaternary structure, homodimer. Interacts with RPS4, RPS6, SNC1, SRFR1, AvrRps4 and HopA1. Part of a nuclear complex made of EDS1, PAD4 and SAG101, that can be redirected to the cytoplasm in the presence of an extranuclear form of EDS1. Interacts (via N-terminus) with PAD4 (via N-terminus). Interacts (via N-terminus) with SAG101. EDS1-SAG101 and EDS1-PAD4 form separate complexes in pathogen-unchallenged cells. Part of a nuclear protein complex made of VICTR, PAD4 and EDS1. Interacts with VICTR.

It localises to the nucleus. The protein resides in the cytoplasm. Its subcellular location is the microsome. In terms of biological role, positive regulator of basal resistance and of effector-triggered immunity specifically mediated by TIR-NB-LRR (TNL) resistance proteins. Disruption by bacterial effector of EDS1-TIR-NB-LRR resistance protein interactions constitutes the first step in resistance activation. Acts redundantly with salicylic acid to regulate resistance gene-mediated signaling. Triggers early plant defenses and hypersensitive response independently of PAD4, and then recruits PAD4 to potentiate plant defenses through the accumulation of salicylic acid. Nuclear localization is essential for basal and TNL-conditioned immunity and for reprogramming defense gene expression, while cytoplasmic EDS1 is required to induce a complete immune response. Heterodimerization with PAD4 and/or SGA101 is necessary for TNL-mediated effector-triggered immunity. Contributes to nonhost resistance against E.amylovora. Loss of EDS1-PAD4 interaction compromises basal but not TNL-triggered resistance. Necessary for systemic acquired resistance (SAR) signal generation and perception. Has no direct lipase activity. Putative lipase activity is dispensable for immune functions. The protein is Protein EDS1 of Arabidopsis thaliana (Mouse-ear cress).